Reading from the N-terminus, the 157-residue chain is 2-C-methyl-D-erythritol 2,4-cyclodiphosphate synthase (157 aa).

Positions 8 and 10 each coordinate a divalent metal cation. 4-CDP-2-C-methyl-D-erythritol 2-phosphate is bound by residues 8–10 (DVH) and 34–35 (HS). Residue histidine 42 participates in a divalent metal cation binding. Residues 56 to 58 (DIG), 61 to 65 (FPDTD), 100 to 106 (AQAPKMA), 132 to 135 (TTSE), phenylalanine 139, and arginine 142 contribute to the 4-CDP-2-C-methyl-D-erythritol 2-phosphate site.

Belongs to the IspF family. As to quaternary structure, homotrimer. A divalent metal cation is required as a cofactor.

It carries out the reaction 4-CDP-2-C-methyl-D-erythritol 2-phosphate = 2-C-methyl-D-erythritol 2,4-cyclic diphosphate + CMP. Its pathway is isoprenoid biosynthesis; isopentenyl diphosphate biosynthesis via DXP pathway; isopentenyl diphosphate from 1-deoxy-D-xylulose 5-phosphate: step 4/6. Functionally, involved in the biosynthesis of isopentenyl diphosphate (IPP) and dimethylallyl diphosphate (DMAPP), two major building blocks of isoprenoid compounds. Catalyzes the conversion of 4-diphosphocytidyl-2-C-methyl-D-erythritol 2-phosphate (CDP-ME2P) to 2-C-methyl-D-erythritol 2,4-cyclodiphosphate (ME-CPP) with a corresponding release of cytidine 5-monophosphate (CMP). The protein is 2-C-methyl-D-erythritol 2,4-cyclodiphosphate synthase of Photobacterium profundum (strain SS9).